The sequence spans 120 residues: Membrane-anchored ubiquitin-fold protein 4 (120 aa).

The 67-residue stretch at 7 to 73 (VELKFRLYDG…LENGKTVAQC (67 aa)) folds into the Ubiquitin-like domain. Cysteine 115 is lipidated: S-palmitoyl cysteine. Cysteine 117 carries the post-translational modification Cysteine methyl ester. Residue cysteine 117 is the site of S-farnesyl cysteine attachment. Residues 118–120 (TIM) constitute a propeptide, removed in mature form.

In terms of tissue distribution, ubiquitous.

It localises to the cell membrane. Its function is as follows. May serve as docking site to facilitate the association of other proteins to the plasma membrane. This chain is Membrane-anchored ubiquitin-fold protein 4 (MUB4), found in Arabidopsis thaliana (Mouse-ear cress).